Consider the following 133-residue polypeptide: Salivary cystatin-L (133 aa).

Positions 1–19 (MTASFALVLLLGGVAVCIA) are cleaved as a signal peptide. Residues 29–115 (KANHQANPEY…VAQRTCTTVV (87 aa)) form the Cystatin domain.

This sequence belongs to the cystatin family. Salivary gland.

Its subcellular location is the secreted. In terms of biological role, inhibitor of cysteine proteinases. Inhibits host cathepsin L (CTSL) and S (CTSS). Modulates production of various cytokines and chemokines in lipopolysaccharide (LPS)-stimulated mouse dendritic cell. Suppresses maturation of mouse bone-marrow-derived dendritic cells (BMDCs). This chain is Salivary cystatin-L, found in Ixodes persulcatus (Taiga tick).